The primary structure comprises 106 residues: Putative double-stranded DNA mimic protein VIBHAR_02752 (106 aa).

This sequence belongs to the putative dsDNA mimic protein family.

May act as a double-stranded DNA (dsDNA) mimic. Probably regulates the activity of a dsDNA-binding protein. In Vibrio campbellii (strain ATCC BAA-1116), this protein is Putative double-stranded DNA mimic protein VIBHAR_02752.